Reading from the N-terminus, the 266-residue chain is Glucagon-1 (266 aa).

An N-terminal signal peptide occupies residues 1–20 (MKSTCYMIGILLMILQNTYQ). 6 propeptides span residues 21-50 (SPVP…LKEV), 84-95 (SGELSRRNADYE), 136-140 (NAEFE), 175-178 (IRYS), 213-224 (NFSEVHSVEEMD), and 261-266 (DLLEEQ). Polar residues predominate over residues 23–32 (VPETDANSRS). A disordered region spans residues 23–44 (VPETDANSRSVKAARNEAVDDS).

The protein belongs to the glucagon family.

Its subcellular location is the secreted. Its function is as follows. Promotes hydrolysis of glycogen and lipids, and raises the blood sugar level. The chain is Glucagon-1 (gcg1) from Xenopus laevis (African clawed frog).